We begin with the raw amino-acid sequence, 542 residues long: Probable E3 ubiquitin-protein ligase ARI11 (542 aa).

A disordered region spans residues 1 to 25 (MSSSDRDIIDIESGEEDLYSDGGND). Residues 10-19 (DIESGEEDLY) are compositionally biased toward acidic residues. A TRIAD supradomain region spans residues 135 to 342 (VDIQCGICFE…SDHKACNAFK (208 aa)). 18 residues coordinate Zn(2+): Cys-139, Cys-142, Cys-156, His-158, Cys-161, Cys-164, Cys-184, Cys-189, Cys-228, Cys-233, Cys-251, Cys-253, Cys-258, Cys-261, His-266, Cys-271, Cys-298, and Cys-301. The RING-type 1 zinc-finger motif lies at 139–189 (CGICFESYTRKEIARVSCGHPYCKTCWTGYITTKIEDGPGCLRVKCPEPSC). The IBR-type zinc finger occupies 208–271 (DKYYRYFLRS…CEDAHSPVDC (64 aa)). An RING-type 2; atypical zinc finger spans residues 298–328 (CPKCKRPIEKNTGCNHMSCSAPCRHYFCWAC). Cys-311 is a catalytic residue. 6 residues coordinate Zn(2+): Cys-316, Cys-320, Cys-325, Cys-328, His-335, and Cys-338.

The protein belongs to the RBR family. Ariadne subfamily. The cofactor is Zn(2+).

The enzyme catalyses [E2 ubiquitin-conjugating enzyme]-S-ubiquitinyl-L-cysteine + [acceptor protein]-L-lysine = [E2 ubiquitin-conjugating enzyme]-L-cysteine + [acceptor protein]-N(6)-ubiquitinyl-L-lysine.. It functions in the pathway protein modification; protein ubiquitination. Its function is as follows. Might act as an E3 ubiquitin-protein ligase, or as part of E3 complex, which accepts ubiquitin from specific E2 ubiquitin-conjugating enzymes and then transfers it to substrates. The protein is Probable E3 ubiquitin-protein ligase ARI11 (ARI11) of Arabidopsis thaliana (Mouse-ear cress).